Consider the following 207-residue polypeptide: Large ribosomal subunit protein bL25 (207 aa).

Residues 171-207 form a disordered region; the sequence is ESVVTVEVPEDATESTTAPEAAAAPADAAAAPAADAK. Residues 184–207 are compositionally biased toward low complexity; that stretch reads ESTTAPEAAAAPADAAAAPAADAK.

Belongs to the bacterial ribosomal protein bL25 family. CTC subfamily. Part of the 50S ribosomal subunit; part of the 5S rRNA/L5/L18/L25 subcomplex. Contacts the 5S rRNA. Binds to the 5S rRNA independently of L5 and L18.

Functionally, this is one of the proteins that binds to the 5S RNA in the ribosome where it forms part of the central protuberance. In Bifidobacterium longum subsp. infantis (strain ATCC 15697 / DSM 20088 / JCM 1222 / NCTC 11817 / S12), this protein is Large ribosomal subunit protein bL25.